Reading from the N-terminus, the 278-residue chain is Dehydrogenase/reductase SDR family member 4 (278 aa).

36 to 60 (LVTASTDGIGFAIARRLAQDGAHVV) contacts NADP(+). An N6-acetyllysine; alternate modification is found at lysine 92. Lysine 92 carries the post-translational modification N6-succinyllysine; alternate. N6-acetyllysine is present on lysine 105. A Phosphoserine modification is found at isoleucine 140. Serine 169 provides a ligand contact to substrate. The active-site Proton acceptor is tyrosine 182. Lysine 186 contributes to the NADP(+) binding site. Lysine 216 is subject to N6-acetyllysine; alternate. Lysine 216 bears the N6-succinyllysine; alternate mark. The residue at position 220 (serine 220) is a Phosphoserine. Lysine 227 and lysine 234 each carry N6-succinyllysine. A Peroxisomal targeting signal motif is present at residues 276–278 (SRL).

The protein belongs to the short-chain dehydrogenases/reductases (SDR) family. As to quaternary structure, homotetramer. As to expression, predominantly expressed in normal cervix (at protein level). In terms of tissue distribution, expressed in some neoplastic cervical tissues, but not in normal cervix (at protein level). Expressed in a few neoplastic cervical tissues. As to expression, high expression in liver.

The protein resides in the peroxisome. It is found in the nucleus. It catalyses the reaction a secondary alcohol + NADP(+) = a ketone + NADPH + H(+). The catalysed reaction is 3beta-hydroxy-5beta-pregnane-20-one + NADP(+) = 5beta-pregnan-3,20-dione + NADPH + H(+). It carries out the reaction 5beta-dihydrotestosterone + NADPH + H(+) = 5beta-androstane-3beta,17beta-diol + NADP(+). The enzyme catalyses 5beta-androstane-3,17-dione + NADPH + H(+) = 3beta-hydroxy-5beta-androstane-17-one + NADP(+). It catalyses the reaction isatin + NADPH + H(+) = 3-hydroxyindolin-2-one + NADP(+). The catalysed reaction is lithocholate + NADP(+) = 3-oxo-5beta-cholan-24-oate + NADPH + H(+). It carries out the reaction 3-oxo-5beta-cholan-24-oate + NADPH + H(+) = isolithocholate + NADP(+). Its activity is regulated as follows. Inhibited by flavonoids (quercetin and genistein), cetylpyridium chloride, phenylhexane and valproic acid. Low inhibition is observed with fatty acids (myristic acid and lauric acid). No significant inhibition is observed with barbital, dicumarol, indomethacin, metyrapone, ethacrynic acid, disulfiram, hexestrol and benzodiazepines (diazepam and nitrazepam). Functionally, NADPH-dependent oxidoreductase which catalyzes the reduction of a variety of compounds bearing carbonyl groups including ketosteroids, alpha-dicarbonyl compounds, aldehydes, aromatic ketones and quinones. Reduces 3-ketosteroids and benzil into 3beta-hydroxysteroids and R-benzoin, respectively, in contrast to the stereoselectivity of non-primate DHRS4s which produce 3alpha-hydroxysteroids and S-benzoin. Diplays low activity toward all-trans-retinal and no activity toward 9-cis-retinal as compared to non-primate mammals. In the reverse reaction, catalyze the NAD-dependent oxidation of 3beta-hydroxysteroids and alcohol, but with much lower efficiency. Involved in the metabolism of 3beta-hydroxysteroids, isatin and xenobiotic carbonyl compounds. Its function is as follows. No detected catalytic activity in vitro, possibly due to the lack of catalytic site. NADPH-dependent oxidoreductase which catalyzes the reduction of a variety of compounds bearing carbonyl groups including ketosteroids, alpha-dicarbonyl compounds, aldehydes, aromatic ketones and quinones. Involved in the metabolism of 3beta-hydroxysteroids, isatin and xenobiotic carbonyl compounds. Has a higher catalytic activity for xenobiotic alpha-dicarbonyl compounds, sucha as benzil, than isoform 1 and is involved in benzil detoxification. This chain is Dehydrogenase/reductase SDR family member 4, found in Homo sapiens (Human).